Here is a 324-residue protein sequence, read N- to C-terminus: DNA repair and recombination protein RadA (324 aa).

Residue 114-121 participates in ATP binding; the sequence is GEFGSGKT.

This sequence belongs to the eukaryotic RecA-like protein family.

Involved in DNA repair and in homologous recombination. Binds and assemble on single-stranded DNA to form a nucleoprotein filament. Hydrolyzes ATP in a ssDNA-dependent manner and promotes DNA strand exchange between homologous DNA molecules. The polypeptide is DNA repair and recombination protein RadA (Metallosphaera sedula (strain ATCC 51363 / DSM 5348 / JCM 9185 / NBRC 15509 / TH2)).